A 602-amino-acid polypeptide reads, in one-letter code: MSGPRSGSGSDGSTGRPGDAESRRSAYEKETHELTTQVAFLEEEVAMLRRKLSESPRQLRVLEERLAEIQAELSAVTGQNDRLVATLREARDQIVTLKEEVDRLAQPPSGYGIFVSSYEDGTVDVFTQGRKLRVTVSPSVNISDLLPGQEVMLNEALNVVETRAFERQGEIVLLKEVLEGGDRALVLGHTDEERVVMLAQPLLDGPIRSGDSLLIESRSGYAFERIPKSEVEELVLEEVPDIGYEQIGGLKSQIESIRDSVELPFLYKELYREHQLKPPKGVLLYGPPGCGKTLIAKAVANSLAKKVEAKTGGQGTGRAFFLNIKGPELLNKFVGETERQIRLVFQRAREKASEGMPVIVFFDEMDSIFRTRGSGVSSDVENTIVPQLLSEIDGVEQLENVIVIGASNREDMIDPAILRPGRLDVKIKVERPDAEAARDIFAKYVVPELPLYPDDLAEFGGNREATVQAMIQRVVERMYAESEENRFLEVTYANGDKEVLYFKDFNSGAMIENIVARAKKMAVKEHIEGGQKGLRMQYLLAACMDEFKENEDLPNTTNPDDWARISGKKGERIVYIRTLVTGTKGTEAGRSIDTIANTGQYL.

Over residues 1–17 (MSGPRSGSGSDGSTGRP) the composition is skewed to low complexity. The segment at 1–31 (MSGPRSGSGSDGSTGRPGDAESRRSAYEKET) is disordered. The span at 18–31 (GDAESRRSAYEKET) shows a compositional bias: basic and acidic residues. Residues 19 to 106 (DAESRRSAYE…LKEEVDRLAQ (88 aa)) are a coiled coil. 289 to 294 (GCGKTL) serves as a coordination point for ATP. The tract at residues 601–602 (YL) is docks into pockets in the proteasome alpha-ring.

This sequence belongs to the AAA ATPase family. Homohexamer. Assembles into a hexameric ring structure that caps the 20S proteasome core. Strongly interacts with the prokaryotic ubiquitin-like protein Pup through a hydrophobic interface; the interacting region of ARC lies in its N-terminal coiled-coil domain. There is one Pup binding site per ARC hexamer ring. Upon ATP-binding, the C-terminus of ARC interacts with the alpha-rings of the proteasome core, possibly by binding to the intersubunit pockets.

It functions in the pathway protein degradation; proteasomal Pup-dependent pathway. Its function is as follows. ATPase which is responsible for recognizing, binding, unfolding and translocation of pupylated proteins into the bacterial 20S proteasome core particle. May be essential for opening the gate of the 20S proteasome via an interaction with its C-terminus, thereby allowing substrate entry and access to the site of proteolysis. Thus, the C-termini of the proteasomal ATPase may function like a 'key in a lock' to induce gate opening and therefore regulate proteolysis. The protein is Proteasome-associated ATPase of Frankia casuarinae (strain DSM 45818 / CECT 9043 / HFP020203 / CcI3).